A 294-amino-acid chain; its full sequence is MTEDIRLVIITGMSGAGKTVAMQSFEDLGYFCIDNMPPSLLPKFWDLVRESGKLSKIALVIDLRSRAFYDEIVRMLNDVAVHGTMNAQVLFLDASDAELVSRYKETRRSHPLARNGRVLEGISRERELLAPIRQAAQLVIDTTKLSPRKLREEIFHNYETETTQAFHIELMSFGFKYGLPIDADIVMDVRFLPNPYYLPELRNQTGMDQPVYDYVMNQPQTEEFYQRFLGLLTTIVPGYKQEGKSSLTIAIGCTGGQHRSVALTQRLGQALGNTYPVHVTHRDIEKRKESANRS.

Residue 12–19 coordinates ATP; that stretch reads GMSGAGKT. Residue 62 to 65 participates in GTP binding; the sequence is DLRS.

This sequence belongs to the RapZ-like family.

In terms of biological role, displays ATPase and GTPase activities. This chain is Nucleotide-binding protein LVIS_0651, found in Levilactobacillus brevis (strain ATCC 367 / BCRC 12310 / CIP 105137 / JCM 1170 / LMG 11437 / NCIMB 947 / NCTC 947) (Lactobacillus brevis).